Reading from the N-terminus, the 391-residue chain is DNA-directed RNA polymerase subunit Rpo1C (391 aa).

This sequence belongs to the RNA polymerase beta' chain family. Part of the RNA polymerase complex.

Its subcellular location is the cytoplasm. The protein resides in the chromosome. The enzyme catalyses RNA(n) + a ribonucleoside 5'-triphosphate = RNA(n+1) + diphosphate. Functionally, DNA-dependent RNA polymerase (RNAP) catalyzes the transcription of DNA into RNA using the four ribonucleoside triphosphates as substrates. Forms part of the jaw domain. The chain is DNA-directed RNA polymerase subunit Rpo1C from Thermococcus kodakarensis (strain ATCC BAA-918 / JCM 12380 / KOD1) (Pyrococcus kodakaraensis (strain KOD1)).